Reading from the N-terminus, the 225-residue chain is Translation initiation factor 6 (225 aa).

This sequence belongs to the eIF-6 family.

Functionally, binds to the 50S ribosomal subunit and prevents its association with the 30S ribosomal subunit to form the 70S initiation complex. This chain is Translation initiation factor 6, found in Hyperthermus butylicus (strain DSM 5456 / JCM 9403 / PLM1-5).